Reading from the N-terminus, the 1214-residue chain is Filamin-A-interacting protein 1 (1214 aa).

The span at 1–15 (MRSRNQGGESSSNGH) shows a compositional bias: polar residues. A disordered region spans residues 1 to 73 (MRSRNQGGES…ESEKKTKKPL (73 aa)). 2 stretches are compositionally biased toward basic and acidic residues: residues 32-47 (PSED…KGED) and 61-73 (PSGE…KKPL). Residue S138 is modified to Phosphoserine. Coiled-coil stretches lie at residues 192–581 (DYMN…KLRS) and 624–778 (PEDN…ELEL). Disordered regions lie at residues 875–898 (KREN…GHPG) and 949–976 (KPRI…GPER). Position 979 is a phosphoserine (S979). Residues 1104-1192 (VSTGTVLRSP…TKFQPRAETQ (89 aa)) are disordered. The span at 1126 to 1140 (VTSTITITPVTTSST) shows a compositional bias: low complexity. Positions 1141-1157 (RGTQSVSGQDGSSQRPT) are enriched in polar residues. Residues 1169–1180 (AGKPVVAAPGAG) are compositionally biased toward low complexity.

Belongs to the FILIP1 family. Interacts with FLNA. Interacts with RHOD (in GTP-bound form).

The protein resides in the cytoplasm. Its subcellular location is the cytoskeleton. Its function is as follows. By acting through a filamin-A/F-actin axis, it controls the start of neocortical cell migration from the ventricular zone. May be able to induce the degradation of filamin-A. This is Filamin-A-interacting protein 1 (Filip1) from Mus musculus (Mouse).